Here is a 133-residue protein sequence, read N- to C-terminus: Large ribosomal subunit protein bL20 (133 aa).

It belongs to the bacterial ribosomal protein bL20 family.

Functionally, binds directly to 23S ribosomal RNA and is necessary for the in vitro assembly process of the 50S ribosomal subunit. It is not involved in the protein synthesizing functions of that subunit. The sequence is that of Large ribosomal subunit protein bL20 from Rubrobacter xylanophilus (strain DSM 9941 / JCM 11954 / NBRC 16129 / PRD-1).